A 141-amino-acid polypeptide reads, in one-letter code: uncharacterized protein (141 aa).

Transmembrane regions (helical) follow at residues 20-42 (FLVN…FCLA) and 52-74 (LHLC…IFTL).

The protein localises to the cell membrane. This is an uncharacterized protein from Archaeoglobus fulgidus (strain ATCC 49558 / DSM 4304 / JCM 9628 / NBRC 100126 / VC-16).